A 132-amino-acid chain; its full sequence is MDVTRLLLATLLVFLCFFTACSHPPPGEKLRDDRSLRSNSSVNLLDFPSVSIVALNKNSKQISRKEAEKKRSSKKEASMKKVARPRTPLSAPCVATRDSCKPPAPACCDPCASCQCRFFRSACSCRVLSLNC.

The N-terminal stretch at 1 to 22 (MDVTRLLLATLLVFLCFFTACS) is a signal peptide. N-linked (GlcNAc...) asparagine glycosylation is present at Asn-39. The disordered stretch occupies residues 61 to 87 (QISRKEAEKKRSSKKEASMKKVARPRT). The segment covering 63 to 79 (SRKEAEKKRSSKKEASM) has biased composition (basic and acidic residues). 5 cysteine pairs are disulfide-bonded: Cys-93–Cys-108, Cys-100–Cys-114, Cys-107–Cys-125, Cys-111–Cys-132, and Cys-116–Cys-123. The region spanning 93 to 132 (CVATRDSCKPPAPACCDPCASCQCRFFRSACSCRVLSLNC) is the Agouti domain.

Its subcellular location is the secreted. Involved in the regulation of melanogenesis. The binding of ASP to MC1R precludes alpha-MSH initiated signaling and thus blocks production of cAMP, leading to a down-regulation of eumelanogenesis (brown/black pigment) and thus increasing synthesis of pheomelanin (yellow/red pigment). The chain is Agouti-signaling protein (ASIP) from Macaca nigrescens (Gorontalo macaque).